A 291-amino-acid chain; its full sequence is Ribosomal RNA small subunit methyltransferase A (291 aa).

S-adenosyl-L-methionine is bound by residues asparagine 28, leucine 30, glycine 55, glutamate 77, aspartate 103, and asparagine 123.

This sequence belongs to the class I-like SAM-binding methyltransferase superfamily. rRNA adenine N(6)-methyltransferase family. RsmA subfamily.

The protein localises to the cytoplasm. The catalysed reaction is adenosine(1518)/adenosine(1519) in 16S rRNA + 4 S-adenosyl-L-methionine = N(6)-dimethyladenosine(1518)/N(6)-dimethyladenosine(1519) in 16S rRNA + 4 S-adenosyl-L-homocysteine + 4 H(+). In terms of biological role, specifically dimethylates two adjacent adenosines (A1518 and A1519) in the loop of a conserved hairpin near the 3'-end of 16S rRNA in the 30S particle. May play a critical role in biogenesis of 30S subunits. This is Ribosomal RNA small subunit methyltransferase A from Azorhizobium caulinodans (strain ATCC 43989 / DSM 5975 / JCM 20966 / LMG 6465 / NBRC 14845 / NCIMB 13405 / ORS 571).